Reading from the N-terminus, the 75-residue chain is Serine rich endogenous peptide 4 (75 aa).

The first 31 residues, 1 to 31, serve as a signal peptide directing secretion; that stretch reads MATKTSNLGHLLLSLFILLLFILSQVGVAQA. Residues 51 to 75 form a disordered region; that stretch reads PPPLRGIVKPPIASFHSASPKDKGP. The short motif at 61-75 is the SCOOP motif element; sequence PIASFHSASPKDKGP. Residues 67–69 carry the SxS motif essential for MIK2 binding motif; it reads SAS.

Belongs to the serine rich endogenous peptide (SCOOP) phytocytokine family. Interacts with MIK2 (via extracellular leucine-rich repeat domain); this interaction triggers the formation of complex between MIK2 and the BAK1/SERK3 and SERK4 coreceptors, and subsequent BAK1 activation by phosphorylation. Mostly expressed in leaves and seedlings shoots, and, to a lower extent, in roots, stems, siliques, seeds and flowers.

It localises to the cell membrane. Its subcellular location is the secreted. The protein localises to the extracellular space. The protein resides in the apoplast. Functionally, brassicaceae-specific phytocytokine (plant endogenous peptide released into the apoplast) perceived by MIK2 in a BAK1/SERK3 and SERK4 coreceptors-dependent manner, that modulates various physiological and antimicrobial processes including growth prevention and reactive oxygen species (ROS) response regulation. Inhibits root growth. Prevents general growth and development. Exhibits antibacterial effects against Pseudomonas syringae pv. tomato DC3000, Ralstonia solanacearum, Bacillus subtilis and Agrobacterium tumefaciens, thus being an antimicrobial peptide (AMP). This is Serine rich endogenous peptide 4 from Arabidopsis thaliana (Mouse-ear cress).